A 119-amino-acid polypeptide reads, in one-letter code: Holo-[acyl-carrier-protein] synthase (119 aa).

Mg(2+) contacts are provided by D8 and E59.

This sequence belongs to the P-Pant transferase superfamily. AcpS family. The cofactor is Mg(2+).

The protein resides in the cytoplasm. The enzyme catalyses apo-[ACP] + CoA = holo-[ACP] + adenosine 3',5'-bisphosphate + H(+). Functionally, transfers the 4'-phosphopantetheine moiety from coenzyme A to a Ser of acyl-carrier-protein. The chain is Holo-[acyl-carrier-protein] synthase from Lactococcus lactis subsp. lactis (strain IL1403) (Streptococcus lactis).